Consider the following 258-residue polypeptide: Thiazole synthase (258 aa).

Catalysis depends on Lys-100, which acts as the Schiff-base intermediate with DXP. 1-deoxy-D-xylulose 5-phosphate is bound by residues Gly-161, 187–188, and 209–210; these read AG and NT.

This sequence belongs to the ThiG family. Homotetramer. Forms heterodimers with either ThiH or ThiS.

It is found in the cytoplasm. The enzyme catalyses [ThiS sulfur-carrier protein]-C-terminal-Gly-aminoethanethioate + 2-iminoacetate + 1-deoxy-D-xylulose 5-phosphate = [ThiS sulfur-carrier protein]-C-terminal Gly-Gly + 2-[(2R,5Z)-2-carboxy-4-methylthiazol-5(2H)-ylidene]ethyl phosphate + 2 H2O + H(+). It participates in cofactor biosynthesis; thiamine diphosphate biosynthesis. In terms of biological role, catalyzes the rearrangement of 1-deoxy-D-xylulose 5-phosphate (DXP) to produce the thiazole phosphate moiety of thiamine. Sulfur is provided by the thiocarboxylate moiety of the carrier protein ThiS. In vitro, sulfur can be provided by H(2)S. The protein is Thiazole synthase of Campylobacter jejuni subsp. doylei (strain ATCC BAA-1458 / RM4099 / 269.97).